Consider the following 175-residue polypeptide: 3-hydroxyanthranilate 3,4-dioxygenase (175 aa).

Residue arginine 45 coordinates O2. Fe cation-binding residues include histidine 49, glutamate 55, and histidine 93. Glutamate 55 serves as a coordination point for substrate. Residues arginine 97 and glutamate 107 each coordinate substrate. Positions 122, 125, 159, and 162 each coordinate a divalent metal cation.

Belongs to the 3-HAO family. Requires Fe(2+) as cofactor.

The protein localises to the cytoplasm. It carries out the reaction 3-hydroxyanthranilate + O2 = (2Z,4Z)-2-amino-3-carboxymuconate 6-semialdehyde. Its pathway is cofactor biosynthesis; NAD(+) biosynthesis; quinolinate from L-kynurenine: step 3/3. Functionally, catalyzes the oxidative ring opening of 3-hydroxyanthranilate to 2-amino-3-carboxymuconate semialdehyde, which spontaneously cyclizes to quinolinate. This chain is 3-hydroxyanthranilate 3,4-dioxygenase, found in Lodderomyces elongisporus (strain ATCC 11503 / CBS 2605 / JCM 1781 / NBRC 1676 / NRRL YB-4239) (Yeast).